Here is a 236-residue protein sequence, read N- to C-terminus: Rab-like protein 3 (236 aa).

A small GTPase-like region spans residues 1-236; it reads MASLDRVKVL…AGTLKSLHYD (236 aa). Residues 16–21, 148–150, and 179–180 contribute to the GTP site; these read GVGKSS, KLD, and DC.

This sequence belongs to the small GTPase superfamily. Rab family. As to quaternary structure, homodimer. Interacts with GPR89; the interaction stabilizes GPR89. Interacts with RAP1GDS1.

Functionally, required for KRAS signaling regulation and modulation of cell proliferation. Regulator of KRAS prenylation, and probably prenylation of other small GTPases. Required for lymphocyte development and function. Not required for myeloid cell development. This is Rab-like protein 3 (RABL3) from Homo sapiens (Human).